An 816-amino-acid polypeptide reads, in one-letter code: MPNWETSTAAPSYEQHNAWYSSMFAANIKQEPLSHHHHHHGQQHHDNHSNSNSGASSPRQSPLPSPIPPSTQLEQYLKQQQQQQQQQQQPMDTLCAAAMTPSPSNNDQNSLQHFDATLQQQLLQQQQYQQHFQAAQHQQQQHHHLALGGFNPLTPPGLPNPMQHYYGGNMRPSPQPTPTAAPTAVAAAIQTGDKLQALTPPMDVTPPKSPAKSQQSSAEPEKEHDLMSNSSEDMKYMAESEDDDSNIRMPIYNSHGKMKNYKCKTCGVVAITKVDFWAHTRTHMKPDKILQCAKCPFVTEFKHHLEYHIRKHKNQKPFQCDKCSYTCVNKSMLNSHRKSHSSVYQYRCADCDYATKYCHSFKLHLRKYGHKPGMVLDEDGTPNPSLVIDVYGTRRGPKSKSFSGSGSSCSSTSKRSNASAAAAQQQQQPVATSQLSAALQGFPMPAAAAGTAAGAAGTAAPAAVAPVSPPSPAKSVASVEQAPSLPSALLPPLASLLQQNRNMAFFPYWNLNLQVLAAQQQAAVLAQLSPRMRDQLQQQQQQQHQQQQQQQQQQQQQQQQLPAHSENEEDEEEEEHEDDFERKSVDSAMDLSQGTPVKEEPQQQQQQQQLPHSNHMAINLKLKDEDTPLISSSSASRRKGRVLKLDTLLQLKSAAMSSPEQQLKLPASVLPTASSPIAGSSANKQLADDPCSGASSADESMETGRVPQVNISASSTASSSGNSSNASSSTSNPTAAATVATSGTVSSSSSSSTTTSSSAPAIYECKYCDIYFKDAVLYTIHMGYHSCDDVFKCNMCGEKCDGPVGLFVHMARNAHS.

Disordered stretches follow at residues 33–92 (LSHH…QPMD), 129–151 (QQHF…GGFN), 165–185 (YYGG…PTAV), and 197–229 (ALTP…LMSN). 3 stretches are compositionally biased toward low complexity: residues 49 to 60 (SNSNSGASSPRQ), 79 to 89 (QQQQQQQQQQQ), and 129 to 139 (QQHFQAAQHQQ). Thr-199 carries the post-translational modification Phosphothreonine. Phosphoserine occurs at positions 209, 228, 230, and 231. The segment covering 219-229 (EPEKEHDLMSN) has biased composition (basic and acidic residues). 4 consecutive C2H2-type zinc fingers follow at residues 261-283 (YKCK…TRTH), 290-312 (LQCA…IRKH), 318-340 (FQCD…RKSH), and 346-364 (YRCA…FKLH). Disordered regions lie at residues 387 to 427 (VIDV…QQQQ), 536 to 612 (LQQQ…QLPH), and 679 to 734 (GSSA…SNPT). Low complexity-rich tracts occupy residues 399–427 (SKSF…QQQQ) and 536–560 (LQQQ…QQQQ). Residues 567–578 (NEEDEEEEEHED) are compositionally biased toward acidic residues. Phosphoserine occurs at positions 584 and 587. The span at 712 to 734 (SASSTASSSGNSSNASSSTSNPT) shows a compositional bias: low complexity. 2 C2H2-type zinc fingers span residues 763–785 (YECK…MGYH) and 791–815 (FKCN…RNAH).

It belongs to the hunchback C2H2-type zinc-finger protein family.

The protein localises to the nucleus. Its function is as follows. Gap class segmentation protein that controls development of head structures. This Drosophila virilis (Fruit fly) protein is Protein hunchback.